The chain runs to 415 residues: Homoserine O-succinyltransferase (415 aa).

The 315-residue stretch at 69 to 383 (NAVLVCHALN…PHGHDAFLLD (315 aa)) folds into the AB hydrolase-1 domain. S175 functions as the Nucleophile in the catalytic mechanism. R245 provides a ligand contact to substrate. Residues D344 and H377 contribute to the active site. D378 serves as a coordination point for substrate.

This sequence belongs to the AB hydrolase superfamily. MetX family. As to quaternary structure, homodimer.

It is found in the cytoplasm. The enzyme catalyses L-homoserine + succinyl-CoA = O-succinyl-L-homoserine + CoA. Its pathway is amino-acid biosynthesis; L-methionine biosynthesis via de novo pathway; O-succinyl-L-homoserine from L-homoserine: step 1/1. Its function is as follows. Transfers a succinyl group from succinyl-CoA to L-homoserine, forming succinyl-L-homoserine. This is Homoserine O-succinyltransferase from Bordetella pertussis (strain Tohama I / ATCC BAA-589 / NCTC 13251).